The chain runs to 482 residues: Alpha-ketoglutarate semialdehyde dehydrogenase (482 aa).

A disordered region spans residues 1 to 28; the sequence is MTDPSKNYVNGEWVTSETGETTEVTNPA. The segment covering 11-25 has biased composition (low complexity); the sequence is GEWVTSETGETTEVT. Residue Cys-284 is part of the active site.

It belongs to the aldehyde dehydrogenase family. In terms of assembly, homotetramer.

The catalysed reaction is 2,5-dioxopentanoate + NADP(+) + H2O = 2-oxoglutarate + NADPH + 2 H(+). Its pathway is carbohydrate metabolism; D-xylose degradation. Its function is as follows. Alpha-ketoglutarate semialdehyde dehydrogenase involved in the degradation of D-xylose, a major component of hemicelluloses such as xylan. Catalyzes the fifth reaction in the xylose utilization pathway through dehydratation of alpha-ketoglutarate semialdehyde (2,5-dioxopentanoate) into alpha-ketoglutarate. In Haloferax volcanii (strain ATCC 29605 / DSM 3757 / JCM 8879 / NBRC 14742 / NCIMB 2012 / VKM B-1768 / DS2) (Halobacterium volcanii), this protein is Alpha-ketoglutarate semialdehyde dehydrogenase.